The following is a 284-amino-acid chain: NADH-cytochrome b5 reductase 1 (284 aa).

Residues 8–28 traverse the membrane as a helical segment; that stretch reads PLFVFSTIAIIISTFVIFYFV. Positions 41 to 144 constitute an FAD-binding FR-type domain; sequence DTFQKFPLIE…RGPKGFFTYT (104 aa). FAD contacts are provided by residues 124-139 and 150-182; these read DSKKVGEYVEIRGPKG and SFGMIAGGTGIAPMYQIITAILRNPADKTKISL.

It belongs to the flavoprotein pyridine nucleotide cytochrome reductase family. Monomer. Component of the 2-(3-amino-3-carboxypropyl)histidine synthase complex composed of DPH1, DPH2, DPH3 and a NADH-dependent reductase, predominantly CBR1. It depends on FAD as a cofactor.

The protein resides in the mitochondrion outer membrane. The catalysed reaction is 2 Fe(III)-[cytochrome b5] + NADH = 2 Fe(II)-[cytochrome b5] + NAD(+) + H(+). It carries out the reaction 2 Fe(3+)-[Dph3] + NADH = 2 Fe(2+)-[Dph3] + NAD(+) + H(+). Its pathway is protein modification; peptidyl-diphthamide biosynthesis. In terms of biological role, NADH-dependent reductase for DPH3 and cytochrome b5. Required for the first step of diphthamide biosynthesis, a post-translational modification of histidine which occurs in elongation factor 2. DPH1 and DPH2 transfer a 3-amino-3-carboxypropyl (ACP) group from S-adenosyl-L-methionine (SAM) to a histidine residue, the reaction is assisted by a reduction system comprising DPH3 and a NADH-dependent reductase, predominantly CBR1. By reducing DPH3, also involved in the formation of the tRNA wobble base modification mcm5s 2U (5-methoxycarbonylmethyl-2-thiouridine), mediated by the elongator complex. The cytochrome b5/NADH cytochrome b5 reductase electron transfer system supports the catalytic activity of several sterol biosynthetic enzymes. The sequence is that of NADH-cytochrome b5 reductase 1 (CBR1) from Scheffersomyces stipitis (strain ATCC 58785 / CBS 6054 / NBRC 10063 / NRRL Y-11545) (Yeast).